The following is a 211-amino-acid chain: ATP phosphoribosyltransferase (211 aa).

Belongs to the ATP phosphoribosyltransferase family. Short subfamily. In terms of assembly, heteromultimer composed of HisG and HisZ subunits.

The protein localises to the cytoplasm. It carries out the reaction 1-(5-phospho-beta-D-ribosyl)-ATP + diphosphate = 5-phospho-alpha-D-ribose 1-diphosphate + ATP. Its pathway is amino-acid biosynthesis; L-histidine biosynthesis; L-histidine from 5-phospho-alpha-D-ribose 1-diphosphate: step 1/9. Functionally, catalyzes the condensation of ATP and 5-phosphoribose 1-diphosphate to form N'-(5'-phosphoribosyl)-ATP (PR-ATP). Has a crucial role in the pathway because the rate of histidine biosynthesis seems to be controlled primarily by regulation of HisG enzymatic activity. This chain is ATP phosphoribosyltransferase, found in Bacillus cereus (strain G9842).